Reading from the N-terminus, the 1008-residue chain is PWWP domain-containing protein 3 (1008 aa).

Positions 78-122 form a coiled coil; sequence VSSLLKLKEDVEEEEEEEEEEEEEEEDGEDEEEEEEEEEEEEEEE. Positions 84–124 are disordered; that stretch reads LKEDVEEEEEEEEEEEEEEEDGEDEEEEEEEEEEEEEEEHG. Residues 87–122 are compositionally biased toward acidic residues; it reads DVEEEEEEEEEEEEEEEDGEDEEEEEEEEEEEEEEE. A PWWP domain is found at 127–188; it reads VGDFVWGKIK…ASQLKPFAES (62 aa). Disordered stretches follow at residues 307–339, 399–606, and 668–874; these read EYHE…GLQW, ETEP…LGQE, and NHKF…GPGS. The segment covering 321-330 has biased composition (acidic residues); it reads NNDDDDDDEE. Residues 399–409 show a composition bias toward basic and acidic residues; that stretch reads ETEPADGDVKS. Positions 473-490 are enriched in acidic residues; it reads DDGDDDGSGDKEESEEKE. 3 stretches are compositionally biased toward basic and acidic residues: residues 511–522, 677–687, and 707–725; these read RFDDSVVERSTE, SSDKEKEELSE, and QKAE…TDKH. Positions 726 to 738 are enriched in basic residues; the sequence is GKMKKERKRKKSE. 3 stretches are compositionally biased toward basic and acidic residues: residues 739–758, 768–787, and 794–818; these read SKKE…ESTK, SKKQ…ESTK, and NPES…ESTK. Short sequence motifs (nuclear localization signal) lie at residues 786–793, 809–816, and 841–848; these read TKKERKRK, TRKESVES, and EKKKKKKR. A coiled-coil region spans residues 804 to 824; it reads VEEEETRKESVESTKKERKRK. The span at 842-854 shows a compositional bias: basic residues; that stretch reads KKKKKKREGKSKK.

The protein belongs to the PDP family. Interacts with DEK3. Binds to LHP1, MSI4/FVE and MSI5. Component of the PRC2 (polycomb repressive complex 2) complex which regulates histone methylation on histone H3K27.

The protein localises to the nucleus. Its function is as follows. Together with PDP1, PDP2 and PDP6, interacts with MSI4/FVE and MSI5 to suppress FLC, MAF4 and MAF5 expression by regulating the function of the PRC2 complex and modulating H3K27me3 level, thereby promoting flowering. The polypeptide is PWWP domain-containing protein 3 (Arabidopsis thaliana (Mouse-ear cress)).